A 433-amino-acid polypeptide reads, in one-letter code: 3-phosphoshikimate 1-carboxyvinyltransferase (433 aa).

3-phosphoshikimate contacts are provided by K22, S23, and R27. K22 is a phosphoenolpyruvate binding site. Positions 95 and 123 each coordinate phosphoenolpyruvate. S167, Q169, D315, and K342 together coordinate 3-phosphoshikimate. Q169 lines the phosphoenolpyruvate pocket. D315 serves as the catalytic Proton acceptor. Positions 346 and 387 each coordinate phosphoenolpyruvate.

The protein belongs to the EPSP synthase family. Monomer.

It is found in the cytoplasm. The catalysed reaction is 3-phosphoshikimate + phosphoenolpyruvate = 5-O-(1-carboxyvinyl)-3-phosphoshikimate + phosphate. The protein operates within metabolic intermediate biosynthesis; chorismate biosynthesis; chorismate from D-erythrose 4-phosphate and phosphoenolpyruvate: step 6/7. Catalyzes the transfer of the enolpyruvyl moiety of phosphoenolpyruvate (PEP) to the 5-hydroxyl of shikimate-3-phosphate (S3P) to produce enolpyruvyl shikimate-3-phosphate and inorganic phosphate. This chain is 3-phosphoshikimate 1-carboxyvinyltransferase, found in Legionella pneumophila (strain Corby).